We begin with the raw amino-acid sequence, 586 residues long: Dolichyl-diphosphooligosaccharide--protein glycosyltransferase subunit 1 (586 aa).

The N-terminal stretch at 1–15 is a signal peptide; sequence MRLLFAIALLGAVFA. Residues 16–421 lie on the Lumenal side of the membrane; the sequence is EDAWKAANVD…EFEFVDMLRE (406 aa). A helical transmembrane segment spans residues 422–442; the sequence is PLLASAFFFSLFFVIIVYSRF. Residues 443–586 lie on the Cytoplasmic side of the membrane; sequence DFTISSDPAK…NRADSVLASI (144 aa).

Belongs to the OST1 family. Component of the oligosaccharyltransferase (OST) complex.

It is found in the endoplasmic reticulum membrane. It localises to the cytoplasmic granule. The protein operates within protein modification; protein glycosylation. Its function is as follows. Subunit of the oligosaccharyl transferase (OST) complex that catalyzes the initial transfer of a defined glycan (Glc(3)Man(9)GlcNAc(2) in eukaryotes) from the lipid carrier dolichol-pyrophosphate to an asparagine residue within an Asn-X-Ser/Thr consensus motif in nascent polypeptide chains, the first step in protein N-glycosylation. N-glycosylation occurs cotranslationally and the complex associates with the Sec61 complex at the channel-forming translocon complex that mediates protein translocation across the endoplasmic reticulum (ER). All subunits are required for a maximal enzyme activity. The sequence is that of Dolichyl-diphosphooligosaccharide--protein glycosyltransferase subunit 1 from Caenorhabditis elegans.